Consider the following 332-residue polypeptide: Sesquiterpene synthase MBR_10393 (332 aa).

Residues Asp-91 and Asp-96 each contribute to the Mg(2+) site. A DDXXXD motif motif is present at residues 91 to 96; the sequence is DDLFVD. Arg-184 contacts substrate. Mg(2+) is bound by residues Asn-230, Ser-234, and Glu-238.

Belongs to the terpene synthase family. The cofactor is Mg(2+).

It carries out the reaction (2E,6E)-farnesyl diphosphate + H2O = (+)-corvol ether B + diphosphate. It catalyses the reaction (2E,6E)-farnesyl diphosphate + H2O = (+)-corvol ether A + diphosphate. Terpene synthase that catalyzes the conversion of (2E,6E)-farnesyl diphosphate (FPP) into sesquiterpenes which are important for fungi-environment interactions. Produces a mixture consisting of 8 sesquiterpenes including corvol ethers A and B, as well as traces of epizonarene, gamma-cadinene, delta-cadinene, alpha-cadinene, alpha-cadinol, and an unidentified sesquiterpene. The major product is corvol ether B. In Metarhizium brunneum (strain ARSEF 3297), this protein is Sesquiterpene synthase MBR_10393.